The sequence spans 473 residues: Aspartyl/glutamyl-tRNA(Asn/Gln) amidotransferase subunit B (473 aa).

Belongs to the GatB/GatE family. GatB subfamily. In terms of assembly, heterotrimer of A, B and C subunits.

It catalyses the reaction L-glutamyl-tRNA(Gln) + L-glutamine + ATP + H2O = L-glutaminyl-tRNA(Gln) + L-glutamate + ADP + phosphate + H(+). The catalysed reaction is L-aspartyl-tRNA(Asn) + L-glutamine + ATP + H2O = L-asparaginyl-tRNA(Asn) + L-glutamate + ADP + phosphate + 2 H(+). In terms of biological role, allows the formation of correctly charged Asn-tRNA(Asn) or Gln-tRNA(Gln) through the transamidation of misacylated Asp-tRNA(Asn) or Glu-tRNA(Gln) in organisms which lack either or both of asparaginyl-tRNA or glutaminyl-tRNA synthetases. The reaction takes place in the presence of glutamine and ATP through an activated phospho-Asp-tRNA(Asn) or phospho-Glu-tRNA(Gln). This chain is Aspartyl/glutamyl-tRNA(Asn/Gln) amidotransferase subunit B, found in Mycoplasmopsis synoviae (strain 53) (Mycoplasma synoviae).